The sequence spans 368 residues: Somatostatin receptor type 5 (368 aa).

Residues 1–45 (MEPLFPASPLTTWNTSSVVPSGSGDENGTLAGLGPSPGARAVVVP) are Extracellular-facing. 2 N-linked (GlcNAc...) asparagine glycosylation sites follow: Asn-14 and Asn-27. The helical transmembrane segment at 46-66 (VLYLLVCAVGLGGNTLVIYVV) threads the bilayer. Topologically, residues 67 to 77 (LRHAKMKTVTN) are cytoplasmic. A helical transmembrane segment spans residues 78 to 98 (IYILNLAVADVLLMLGLPFVA). Topologically, residues 99 to 115 (TQNAISYWPFGPVLCRL) are extracellular. A disulfide bond links Cys-113 and Cys-188. The helical transmembrane segment at 116 to 136 (VMTLDGINQFTSIFCLTVMSV) threads the bilayer. Residues 137 to 158 (DRYLAVVHPIRSARWRRPRVAK) lie on the Cytoplasmic side of the membrane. Residues 159 to 179 (LASAAVWAFSLVMSLPLVVFA) form a helical membrane-spanning segment. The Extracellular portion of the chain corresponds to 180 to 207 (DIQEGWNTCNLSWPEPVGLWGAVFIIYT). Asn-189 is a glycosylation site (N-linked (GlcNAc...) asparagine). A helical transmembrane segment spans residues 208–228 (SVLGFFGPLLVICLCYLLIVV). The Cytoplasmic segment spans residues 229–251 (KLKASGVRVGSTRRRSERKVTRM). A helical transmembrane segment spans residues 252 to 272 (VVVVVLVFAGCWLPFFIVNIV). Residues 273-286 (NLAFALPEEPASAG) are Extracellular-facing. Residues 287–309 (AYFFVVVLSYANSCANPLLYGFL) traverse the membrane as a helical segment. The Cytoplasmic portion of the chain corresponds to 310–368 (SDNFRQSFRKVLCLRKGYGAGAEDADATEPQPGPSSRLQEAMMPVRSCKANGLMQTSKL). Cys-322 carries S-palmitoyl cysteine; by ZDHHC5 lipidation.

This sequence belongs to the G-protein coupled receptor 1 family. Heterodimer with SSTR2. Heterodimerization with SSTR2 increases cell growth inhibition activity of SSTR2. In terms of processing, palmitoylated by ZDHHC5, but not ZDHHC3, nor ZDHHC8. Palmitoylation creates an additional intracellular loop which is thought to be important for efficient coupling to G-proteins and may target the protein to lipid rafts.

The protein localises to the cell membrane. Functionally, receptor for somatostatin 28 and to a lesser extent for somatostatin-14. The activity of this receptor is mediated by G proteins which inhibit adenylyl cyclase. Increases cell growth inhibition activity of SSTR2 following heterodimerization. This Bos taurus (Bovine) protein is Somatostatin receptor type 5 (SSTR5).